The chain runs to 241 residues: tRNA pseudouridine synthase A (241 aa).

The Nucleophile role is filled by Asp-52. Residue Tyr-110 coordinates substrate.

The protein belongs to the tRNA pseudouridine synthase TruA family. In terms of assembly, homodimer.

It catalyses the reaction uridine(38/39/40) in tRNA = pseudouridine(38/39/40) in tRNA. Functionally, formation of pseudouridine at positions 38, 39 and 40 in the anticodon stem and loop of transfer RNAs. This Aquifex aeolicus (strain VF5) protein is tRNA pseudouridine synthase A.